Reading from the N-terminus, the 432-residue chain is Probable rhamnogalacturonase E (432 aa).

Residues 1–21 (MQSKTFSVLSSCLLLIATVQG) form the signal peptide. The cysteines at positions 42 and 68 are disulfide-linked. Residues N53, N91, and N106 are each glycosylated (N-linked (GlcNAc...) asparagine). Residue D221 is the Proton donor of the active site. Cysteines 223 and 240 form a disulfide. N241 and N256 each carry an N-linked (GlcNAc...) asparagine glycan. Residue H296 is part of the active site. 2 cysteine pairs are disulfide-bonded: C329–C335 and C357–C366.

Belongs to the glycosyl hydrolase 28 family.

The protein localises to the secreted. In terms of biological role, pectinolytic enzymes consist of four classes of enzymes: pectine lyase, polygalacturonase, pectin methylesterase and rhamnogalacturonase. Hydrolyzes alpha-D-galacturonopyranosyl-(1,2)-alpha-L-rhamnopyranosyl linkages in the backbone of the hairy regions of pectins. In Aspergillus oryzae (strain ATCC 42149 / RIB 40) (Yellow koji mold), this protein is Probable rhamnogalacturonase E (rhgE).